The chain runs to 175 residues: Methylated-DNA--protein-cysteine methyltransferase (175 aa).

Cys-142 acts as the Nucleophile; methyl group acceptor in catalysis.

The protein belongs to the MGMT family.

Its subcellular location is the cytoplasm. The enzyme catalyses a 6-O-methyl-2'-deoxyguanosine in DNA + L-cysteinyl-[protein] = S-methyl-L-cysteinyl-[protein] + a 2'-deoxyguanosine in DNA. It catalyses the reaction a 4-O-methyl-thymidine in DNA + L-cysteinyl-[protein] = a thymidine in DNA + S-methyl-L-cysteinyl-[protein]. Its function is as follows. Involved in the cellular defense against the biological effects of O6-methylguanine (O6-MeG) and O4-methylthymine (O4-MeT) in DNA. Repairs the methylated nucleobase in DNA by stoichiometrically transferring the methyl group to a cysteine residue in the enzyme. This is a suicide reaction: the enzyme is irreversibly inactivated. This chain is Methylated-DNA--protein-cysteine methyltransferase, found in Thermococcus barophilus (strain DSM 11836 / MP).